The sequence spans 169 residues: Ureidoglycolate lyase (169 aa).

It belongs to the ureidoglycolate lyase family. As to quaternary structure, homodimer. Requires Ni(2+) as cofactor.

The enzyme catalyses (S)-ureidoglycolate = urea + glyoxylate. Its pathway is nitrogen metabolism; (S)-allantoin degradation. Catalyzes the catabolism of the allantoin degradation intermediate (S)-ureidoglycolate, generating urea and glyoxylate. Involved in the utilization of allantoin as nitrogen source. This is Ureidoglycolate lyase from Pseudomonas paraeruginosa (strain DSM 24068 / PA7) (Pseudomonas aeruginosa (strain PA7)).